We begin with the raw amino-acid sequence, 894 residues long: Eukaryotic translation initiation factor 3 subunit C (894 aa).

2 disordered regions span residues 1-28 and 162-235; these read MSRFYRRGASDSDTDSSEDEVEELKANK and SDYR…VTKM. Composition is skewed to acidic residues over residues 12–22, 169–189, and 203–214; these read SDTDSSEDEVE, DEDGYETPEDENDEDDFEEVP, and SESESDSDDDDS. Residues 215–224 are compositionally biased toward polar residues; that stretch reads FNWSSEPDTN. The PCI domain maps to 625–801; that stretch reads YHMHINVELM…DCLIMHRVEP (177 aa). A disordered region spans residues 824–894; it reads QILEPRTGRG…RRHPQKPRAF (71 aa). Basic and acidic residues predominate over residues 845–854; it reads RNERQGDKQK. Over residues 855 to 870 the composition is skewed to gly residues; sequence GSGGFQGERRGGPGGP. Residues 884–894 are compositionally biased toward basic residues; the sequence is QRRHPQKPRAF.

This sequence belongs to the eIF-3 subunit C family. As to quaternary structure, component of the eukaryotic translation initiation factor 3 (eIF-3) complex.

The protein localises to the cytoplasm. Its function is as follows. Component of the eukaryotic translation initiation factor 3 (eIF-3) complex, which is involved in protein synthesis of a specialized repertoire of mRNAs and, together with other initiation factors, stimulates binding of mRNA and methionyl-tRNAi to the 40S ribosome. The eIF-3 complex specifically targets and initiates translation of a subset of mRNAs involved in cell proliferation. This is Eukaryotic translation initiation factor 3 subunit C from Caenorhabditis briggsae.